An 884-amino-acid polypeptide reads, in one-letter code: Formin-like protein 9 (884 aa).

The signal sequence occupies residues 1-19; sequence MGMAMRCVLVLFSVSPVLL. The helical transmembrane segment at 140–160 threads the bilayer; it reads IVALGVVGLCLVVLGVVIAAF. Disordered stretches follow at residues 179-204, 295-318, and 403-473; these read FHHG…PDPL, THDS…LSPK, and TMTN…PLPR. Over residues 300-310 the composition is skewed to low complexity; sequence SDSSYQSLSPD. Residues 429-443 are compositionally biased toward pro residues; the sequence is KPAPPPPPQKNPPPN. An FH2 domain is found at 464-884; sequence VGKDGSPLPR…QTLNLVLPLK (421 aa).

It belongs to the formin-like family. Class-I subfamily.

The protein localises to the membrane. This is Formin-like protein 9 (FH9) from Oryza sativa subsp. indica (Rice).